The primary structure comprises 601 residues: 4-hydroxy-3-methylbut-2-en-1-yl diphosphate synthase (flavodoxin) (601 aa).

4 residues coordinate [4Fe-4S] cluster: Cys-507, Cys-510, Cys-542, and Glu-549.

It belongs to the IspG family. [4Fe-4S] cluster serves as cofactor.

The catalysed reaction is (2E)-4-hydroxy-3-methylbut-2-enyl diphosphate + oxidized [flavodoxin] + H2O + 2 H(+) = 2-C-methyl-D-erythritol 2,4-cyclic diphosphate + reduced [flavodoxin]. It functions in the pathway isoprenoid biosynthesis; isopentenyl diphosphate biosynthesis via DXP pathway; isopentenyl diphosphate from 1-deoxy-D-xylulose 5-phosphate: step 5/6. In terms of biological role, converts 2C-methyl-D-erythritol 2,4-cyclodiphosphate (ME-2,4cPP) into 1-hydroxy-2-methyl-2-(E)-butenyl 4-diphosphate. The polypeptide is 4-hydroxy-3-methylbut-2-en-1-yl diphosphate synthase (flavodoxin) (Chlamydia muridarum (strain MoPn / Nigg)).